Consider the following 98-residue polypeptide: Citrate lyase acyl carrier protein (98 aa).

Ser-14 bears the O-(phosphoribosyl dephospho-coenzyme A)serine mark.

Belongs to the CitD family. Oligomer with a subunit composition of (alpha,beta,gamma)6.

Its subcellular location is the cytoplasm. Covalent carrier of the coenzyme of citrate lyase. In Citrobacter koseri (strain ATCC BAA-895 / CDC 4225-83 / SGSC4696), this protein is Citrate lyase acyl carrier protein.